The following is a 212-amino-acid chain: Thymidylate kinase (212 aa).

ATP is bound at residue 11–18 (GPEGAGKT).

The protein belongs to the thymidylate kinase family.

It catalyses the reaction dTMP + ATP = dTDP + ADP. Phosphorylation of dTMP to form dTDP in both de novo and salvage pathways of dTTP synthesis. The polypeptide is Thymidylate kinase (Streptococcus pneumoniae serotype 2 (strain D39 / NCTC 7466)).